Consider the following 808-residue polypeptide: Leucine-rich repeat-containing protein 41 (808 aa).

Positions 45-54 are interaction with Elongin BC complex; that stretch reads ALFELCGRAV. Residues S155, S276, and S326 each carry the phosphoserine modification. 2 disordered regions span residues 269 to 289 and 304 to 404; these read ASRG…SRRP and TRRK…GSGA. T327 bears the Phosphothreonine mark. Residues 357-379 show a composition bias toward low complexity; sequence PSSAPTAASSSTSSKRAPASSVS. Phosphoserine is present on S369. Over residues 383-397 the composition is skewed to basic residues; sequence PLKRFKRATGKKGPR. 7 LRR repeats span residues 483–503, 514–526, 527–551, 609–631, 632–655, 697–724, and 727–748; these read WVSL…IFRL, AGCR…LSDL, FSPL…VLSI, SGSL…FGLV, LQTL…LADC, NSTL…VFSE, and SSSL…LLEF.

Part of an E3 ubiquitin-protein ligase complex with Elongin BC (ELOB and ELOC), RBX1 and CUL5. Component of a probable ECS(LRRC41) complex which contains CUL5, RNF7/RBX2, Elongin BC and LRRC41. Interacts with CUL5, RNF7, ELOB and ELOC.

Its pathway is protein modification; protein ubiquitination. Probable substrate recognition component of an ECS (Elongin BC-CUL2/5-SOCS-box protein) E3 ubiquitin ligase complex which mediates the ubiquitination and subsequent proteasomal degradation of target proteins. The protein is Leucine-rich repeat-containing protein 41 (Lrrc41) of Rattus norvegicus (Rat).